The primary structure comprises 80 residues: Translation initiation factor IF-1, chloroplastic (80 aa).

The region spanning 1–74 is the S1-like domain; it reads MKEQKWIHEG…TRGRIIYRLR (74 aa).

Belongs to the IF-1 family. In terms of assembly, component of the 30S ribosomal translation pre-initiation complex which assembles on the 30S ribosome in the order IF-2 and IF-3, IF-1 and N-formylmethionyl-tRNA(fMet); mRNA recruitment can occur at any time during PIC assembly.

It localises to the plastid. It is found in the chloroplast. One of the essential components for the initiation of protein synthesis. Stabilizes the binding of IF-2 and IF-3 on the 30S subunit to which N-formylmethionyl-tRNA(fMet) subsequently binds. Helps modulate mRNA selection, yielding the 30S pre-initiation complex (PIC). Upon addition of the 50S ribosomal subunit IF-1, IF-2 and IF-3 are released leaving the mature 70S translation initiation complex. This Illicium parviflorum (Yellow anise tree) protein is Translation initiation factor IF-1, chloroplastic.